A 431-amino-acid polypeptide reads, in one-letter code: L-ornithine N(5)-monooxygenase (431 aa).

FAD is bound by residues 40-48 (EKLPTFSWH) and Gln-59. Lys-64 contributes to the substrate binding site. NADP(+) is bound by residues 202-205 (CGQS) and Arg-228. Substrate contacts are provided by residues 242 to 245 (NSLY) and Asn-273. Residue 273 to 275 (NYS) participates in NADP(+) binding. 399–401 (TLL) is a binding site for FAD. Position 402 (Ser-402) interacts with substrate.

This sequence belongs to the lysine N(6)-hydroxylase/L-ornithine N(5)-oxygenase family. FAD serves as cofactor.

Its subcellular location is the cytoplasm. It localises to the nucleus. It catalyses the reaction L-ornithine + NADPH + O2 = N(5)-hydroxy-L-ornithine + NADP(+) + H2O. The catalysed reaction is L-ornithine + NADH + O2 = N(5)-hydroxy-L-ornithine + NAD(+) + H2O. Its pathway is siderophore biosynthesis; ferrichrome biosynthesis. Catalyzes the conversion of L-ornithine to N(5)-hydroxyornithine, the first step in the biosynthesis of all hydroxamate-containing siderophores, such as ferrichrome. The sequence is that of L-ornithine N(5)-monooxygenase from Schizosaccharomyces pombe (strain 972 / ATCC 24843) (Fission yeast).